Reading from the N-terminus, the 143-residue chain is Small ribosomal subunit protein uS12 (143 aa).

P62 bears the Hydroxyproline mark.

The protein belongs to the universal ribosomal protein uS12 family. Component of the 40S small ribosomal subunit.

The protein resides in the cytoplasm. It is found in the cytosol. Its subcellular location is the rough endoplasmic reticulum. This chain is Small ribosomal subunit protein uS12 (RPS23), found in Ciona intestinalis (Transparent sea squirt).